The following is a 609-amino-acid chain: UvrABC system protein C (609 aa).

In terms of domain architecture, GIY-YIG spans 16–94 (HLPGVYRHLD…IKSLRPRYNI (79 aa)). A UVR domain is found at 203-238 (REVMDEIEARMLQASTELRFEEAAVLRDQMGSLSKV).

Belongs to the UvrC family. As to quaternary structure, interacts with UvrB in an incision complex.

It is found in the cytoplasm. In terms of biological role, the UvrABC repair system catalyzes the recognition and processing of DNA lesions. UvrC both incises the 5' and 3' sides of the lesion. The N-terminal half is responsible for the 3' incision and the C-terminal half is responsible for the 5' incision. This chain is UvrABC system protein C, found in Bordetella bronchiseptica (strain ATCC BAA-588 / NCTC 13252 / RB50) (Alcaligenes bronchisepticus).